Here is a 376-residue protein sequence, read N- to C-terminus: Succinyl-diaminopimelate desuccinylase (376 aa).

H66 is a binding site for Zn(2+). Residue D68 is part of the active site. Residue D99 participates in Zn(2+) binding. Residue E133 is the Proton acceptor of the active site. Positions 134, 162, and 349 each coordinate Zn(2+).

It belongs to the peptidase M20A family. DapE subfamily. In terms of assembly, homodimer. Zn(2+) serves as cofactor. It depends on Co(2+) as a cofactor.

The catalysed reaction is N-succinyl-(2S,6S)-2,6-diaminopimelate + H2O = (2S,6S)-2,6-diaminopimelate + succinate. It participates in amino-acid biosynthesis; L-lysine biosynthesis via DAP pathway; LL-2,6-diaminopimelate from (S)-tetrahydrodipicolinate (succinylase route): step 3/3. Catalyzes the hydrolysis of N-succinyl-L,L-diaminopimelic acid (SDAP), forming succinate and LL-2,6-diaminopimelate (DAP), an intermediate involved in the bacterial biosynthesis of lysine and meso-diaminopimelic acid, an essential component of bacterial cell walls. The sequence is that of Succinyl-diaminopimelate desuccinylase from Ruthia magnifica subsp. Calyptogena magnifica.